Reading from the N-terminus, the 514-residue chain is 3-octaprenyl-4-hydroxybenzoate carboxy-lyase (514 aa).

Asn177 contributes to the Mn(2+) binding site. Prenylated FMN is bound by residues 180-182, 194-196, and 199-200; these read IYR, RWL, and RG. Glu243 provides a ligand contact to Mn(2+). Asp314 functions as the Proton donor in the catalytic mechanism.

This sequence belongs to the UbiD family. As to quaternary structure, homohexamer. It depends on prenylated FMN as a cofactor. The cofactor is Mn(2+).

The protein resides in the cell membrane. It catalyses the reaction a 4-hydroxy-3-(all-trans-polyprenyl)benzoate + H(+) = a 2-(all-trans-polyprenyl)phenol + CO2. It participates in cofactor biosynthesis; ubiquinone biosynthesis. Functionally, catalyzes the decarboxylation of 3-octaprenyl-4-hydroxy benzoate to 2-octaprenylphenol, an intermediate step in ubiquinone biosynthesis. This chain is 3-octaprenyl-4-hydroxybenzoate carboxy-lyase, found in Bordetella bronchiseptica (strain ATCC BAA-588 / NCTC 13252 / RB50) (Alcaligenes bronchisepticus).